A 378-amino-acid chain; its full sequence is Heat-inducible transcription repressor HrcA (378 aa).

It belongs to the HrcA family.

Negative regulator of class I heat shock genes (grpE-dnaK-dnaJ and groELS operons). Prevents heat-shock induction of these operons. The chain is Heat-inducible transcription repressor HrcA from Synechocystis sp. (strain ATCC 27184 / PCC 6803 / Kazusa).